Consider the following 256-residue polypeptide: MLIIPAIDIKDGKCVRLTRGDFSQQKIYLDNPLDMAIIWRKQNAKMLHIVDLDAALTGEMVNFERIRQIVEELDIPVQVGGGIRSADDVKRYLDMGVGRVVIGSAAVTNPELVRELMKTWRASKIVVGIDAVNGVPKIKGWTESANLKDFELAQRMKDMGIERIIYTDITRDGMLQGVGYETTRRFAELAGMKVTASGGVTNSEDLRRLAGLQYCGVDSVIIGKAFYECNFPCQELWYNFEEGICLDHNFSTARKR.

The active-site Proton acceptor is Asp-8. The active-site Proton donor is Asp-130.

It belongs to the HisA/HisF family.

It is found in the cytoplasm. The catalysed reaction is 1-(5-phospho-beta-D-ribosyl)-5-[(5-phospho-beta-D-ribosylamino)methylideneamino]imidazole-4-carboxamide = 5-[(5-phospho-1-deoxy-D-ribulos-1-ylimino)methylamino]-1-(5-phospho-beta-D-ribosyl)imidazole-4-carboxamide. It participates in amino-acid biosynthesis; L-histidine biosynthesis; L-histidine from 5-phospho-alpha-D-ribose 1-diphosphate: step 4/9. The polypeptide is 1-(5-phosphoribosyl)-5-[(5-phosphoribosylamino)methylideneamino] imidazole-4-carboxamide isomerase (Chlorobium luteolum (strain DSM 273 / BCRC 81028 / 2530) (Pelodictyon luteolum)).